The sequence spans 592 residues: Ferric-chelate reductase 1 (592 aa).

Residues 2–22 form a helical membrane-spanning segment; the sequence is AAPQITLSVLVIALLTCSVTA. One can recognise a Reelin domain in the interval 13–179; it reads IALLTCSVTA…FTTPKATTQP (167 aa). Asparagine 85, asparagine 308, asparagine 321, and asparagine 353 each carry an N-linked (GlcNAc...) asparagine glycan. The DOMON domain maps to 216 to 331; it reads EPACVFLSFT…ESYYIFFAEG (116 aa). Positions 335–534 constitute a Cytochrome b561 domain; it reads DGRIFRHSQQ…IGTEVILEIH (200 aa). The helical transmembrane segment at 372–392 threads the bilayer; it reads AHGALMFVAWMTTVSIGVLVA. Heme b-binding residues include histidine 373 and histidine 414. Helical transmembrane passes span 415–435, 446–466, 477–499, 515–535, and 569–589; these read RMLM…PFVY, HPYL…LATF, VFNW…AMFL, YAMM…EIHA, and VVLA…LSAI. Residues histidine 446 and histidine 482 each contribute to the heme b site.

Belongs to the FRRS1 family. It depends on heme b as a cofactor. Expressed in spleen, liver and kidney with low expression in brain. Localizes in adult brain to the choroid plexus of the fourth, third, and lateral ventricles and to ependymal cells that line the ventricles.

It is found in the membrane. Its function is as follows. Ferric-chelate reductases reduce Fe(3+) to Fe(2+) before its transport from the endosome to the cytoplasm. In Mus musculus (Mouse), this protein is Ferric-chelate reductase 1 (FRRS1).